Consider the following 325-residue polypeptide: Olfactory receptor 6Y1 (325 aa).

Residues 1–30 are Extracellular-facing; it reads MTTIILEVDNHTVTTRFILLGFPTRPAFQL. The N-linked (GlcNAc...) asparagine glycan is linked to asparagine 10. A helical transmembrane segment spans residues 31–51; sequence LFFSIFLATYLLTLLENLLII. The Cytoplasmic portion of the chain corresponds to 52–59; it reads LAIHSDGQ. A helical membrane pass occupies residues 60–80; that stretch reads LHKPMYFFLSHLSFLEMWYVT. Residues 81-104 are Extracellular-facing; that stretch reads VISPKMLVDFLSHDKSISFNGCMT. Cysteines 102 and 194 form a disulfide. Residues 105–125 form a helical membrane-spanning segment; that stretch reads QLYFFVTFVCTEYILLAIMAF. Residues 126–144 are Cytoplasmic-facing; sequence DRYVAICNPLRYPVIMTNQ. A helical membrane pass occupies residues 145-165; sequence LCGTLAGGCWFCGLMTAMIKM. Topologically, residues 166 to 202 are extracellular; the sequence is VFIAQLHYCGMPQINHYFCDISPLLNVSCEDASQAEM. Asparagine 191 carries N-linked (GlcNAc...) asparagine glycosylation. Residues 203 to 222 traverse the membrane as a helical segment; the sequence is VDFFLALMVIAIPLCVVVAS. The Cytoplasmic portion of the chain corresponds to 223-242; sequence YAAILATILRIPSAQGRQKA. The helical transmembrane segment at 243–263 threads the bilayer; it reads FSTCASHLTVVILFYSMTLFT. Topologically, residues 264 to 276 are extracellular; that stretch reads YARPKLMYAYNSN. The helical transmembrane segment at 277-297 threads the bilayer; that stretch reads KVVSVLYTVIVPLLNPIIYCL. The Cytoplasmic segment spans residues 298–325; it reads RNHEVKAALRKTIHCRGSGPQGNGAFSS.

It belongs to the G-protein coupled receptor 1 family.

It is found in the cell membrane. Functionally, odorant receptor. The sequence is that of Olfactory receptor 6Y1 (OR6Y1) from Homo sapiens (Human).